The chain runs to 204 residues: Guanylate kinase (204 aa).

Positions 18–196 (PKLFTISAPA…SYEILKSIFI (179 aa)) constitute a Guanylate kinase-like domain. ATP is bound at residue 25–32 (APAGAGKT).

Belongs to the guanylate kinase family.

Its subcellular location is the cytoplasm. The catalysed reaction is GMP + ATP = GDP + ADP. In terms of biological role, essential for recycling GMP and indirectly, cGMP. This chain is Guanylate kinase, found in Chlamydia felis (strain Fe/C-56) (Chlamydophila felis).